The chain runs to 152 residues: uncharacterized protein (152 aa).

This is an uncharacterized protein from Methanocaldococcus jannaschii (strain ATCC 43067 / DSM 2661 / JAL-1 / JCM 10045 / NBRC 100440) (Methanococcus jannaschii).